Reading from the N-terminus, the 422-residue chain is Zinc finger protein Gfi-1 (422 aa).

The segment at 1-20 is SNAG domain; that stretch reads MPRSFLVKSKKAHSYHQPRS. A disordered region spans residues 1 to 107; sequence MPRSFLVKSK…SPASEKSVCP (107 aa). Ser-20 bears the Phosphoserine mark. The segment covering 34 to 47 has biased composition (low complexity); the sequence is APGGADGTSSAGGA. Ser-56 carries the post-translational modification Phosphoserine. Residues 57–72 are compositionally biased toward polar residues; that stretch reads PESQLTEAPDRSSASP. The tract at residues 140 to 257 is required for interaction with RELA; that stretch reads RPCAALDRGA…LLLGGGSYKC (118 aa). 6 C2H2-type zinc fingers span residues 255-278, 284-306, 312-334, 340-362, 368-390, and 396-419; these read YKCIKCSKVFSTPHGLEVHVRRSH, FACEMCGKTFGHAVSLEQHKAVH, FDCKICGKSFKRSSTLSTHLLIH, YPCQYCGKRFHQKSDMKKHTFIH, HKCQVCGKAFSQSSNLITHSRKH, and FGCDLCGKGFQRKVDLRRHRETQH.

In terms of assembly, interacts with U2AF1L4. Component of RCOR-GFI-KDM1A-HDAC complexes. Interacts directly with RCOR1, KDM1A and HDAC2. Also interacts with HDAC1 and HDAC3. Interacts (via the zinc-finger domain) with ARIH2; the interaction prevents GFI1 ubiquitination and proteasomal degradation. Interacts with PIAS3; the interaction relieves the inhibitory effect of PIAS3 on STAT3-mediated transcriptional activity. Forms a complex with EHMT2 and HDAC1 to promote 'Lys-9' dimethylation of H3 (H3K9Me2) and repress expression of target genes. Interacts directly with EHMT2. Component of the GFI1-AJUBA-HDAC1 repressor complex. Interacts directly with AJUBA (via ITS LIM domains); the interaction results in the HDAC-dependent corepression of a subset of GFI1 target genes and, occurs independently of the SNAG domain. Interacts with SPI1; the interaction inhibits SPI1 transcriptional activity targeted at macrophage-specific genes, repressing macrophage differentiation of myeloid progenitor cells and promoting granulocyte commitment. Interacts with RUNX1T1; the interaction represses HDAC-mediated transcriptional activity. Interacts with RELA; the interaction occurs on liposaccharide (LPS) stimulation and controls RELA DNA binding activity and regulates endotoxin-mediated TOLL-like receptor inflammatory response. Interacts (via the C-terminal zinc fingers) with ZBTB17; the interaction results in the recruitment of GFI1 to the CDKN1A/p21 and CDKNIB promoters and repression of transcription. In terms of processing, ubiquitinated.

It is found in the nucleus. In terms of biological role, transcription repressor essential for hematopoiesis. Functions in a cell-context and development-specific manner. Binds to 5'-TAAATCAC[AT]GCA-3' in the promoter region of a large number of genes. Component of several complexes, including the EHMT2-GFI1-HDAC1, AJUBA-GFI1-HDAC1 and RCOR-GFI-KDM1A-HDAC complexes, that suppress, via histone deacetylase (HDAC) recruitment, a number of genes implicated in multilineage blood cell development. Regulates neutrophil differentiation, promotes proliferation of lymphoid cells, and is required for granulocyte development. Inhibits SPI1 transcriptional activity at macrophage-specific genes, repressing macrophage differentiation of myeloid progenitor cells and promoting granulocyte commitment. Mediates, together with U2AF1L4, the alternative splicing of CD45 and controls T-cell receptor signaling. Regulates the endotoxin-mediated Toll-like receptor (TLR) inflammatory response by antagonizing RELA. Cooperates with CBFA2T2 to regulate ITGB1-dependent neurite growth. Controls cell-cycle progression by repressing CDKNIA/p21 transcription in response to TGFB1 via recruitment of GFI1 by ZBTB17 to the CDKNIA/p21 and CDKNIB promoters. Required for the maintenance of inner ear hair cells. In addition to its role in transcription, acts as a substrate adapter for PRMT1 in the DNA damage response: facilitates the recognition of TP53BP1 and MRE11 substrates by PRMT1, promoting their methylation and the DNA damage response. In Canis lupus familiaris (Dog), this protein is Zinc finger protein Gfi-1 (GFI1).